The primary structure comprises 260 residues: MPVHLLIVDALNLIRRIHAVQGSPCITACQHALHQLIQNSQPTHAVAVFDDEDRDTSWRHQLLPDYKAGRTPMPDNLKQELPQIKTAFAAVGVESWHSPGNEADDLAATLATKLSSAGHQATIISTDKGYCQLLAPHIQIRDYFQKRWLDLPFIEQEFSVSPQQLTDYWGLAGISSSKIPGVAGIGPKSAAQLLQQAGNLEALYQQLDAVPEKWRKKLEQHKEMALISRQVATLRTDLTLNGNLQQLRLPVQSSTQPQSY.

Asp-104 provides a ligand contact to Mg(2+). The 91-residue stretch at 160–250 folds into the 5'-3' exonuclease domain; sequence VSPQQLTDYW…NGNLQQLRLP (91 aa). Residues Leu-171, Ala-172, Pro-180, Val-182, and Ile-185 each coordinate K(+). The segment at 184-189 is interaction with DNA; that stretch reads GIGPKS.

The protein belongs to the Xni family. Requires Mg(2+) as cofactor. K(+) serves as cofactor.

Has flap endonuclease activity. During DNA replication, flap endonucleases cleave the 5'-overhanging flap structure that is generated by displacement synthesis when DNA polymerase encounters the 5'-end of a downstream Okazaki fragment. In Pectobacterium atrosepticum (strain SCRI 1043 / ATCC BAA-672) (Erwinia carotovora subsp. atroseptica), this protein is Flap endonuclease Xni.